The sequence spans 685 residues: ATP-dependent RNA helicase MSS116, mitochondrial (685 aa).

Residues 1 to 34 (MLVLQRIPKRALQFNGVTGTVCSTRLFHHAFNLN) constitute a mitochondrion transit peptide. Residues 42–107 (SEERRYRNSN…NNGSRRRYQD (66 aa)) form a disordered region. Low complexity predominate over residues 58-69 (SDSNSNNKYRNS). Basic and acidic residues predominate over residues 70-86 (SYDDNRSRSNYGGDKRN). Low complexity predominate over residues 88–99 (RNNNNYGNNRNN). A Q motif motif is present at residues 138-166 (SLLEESLLDANVHKAISAMKFESLTPVQQ). A Helicase ATP-binding domain is found at 170-357 (KPILTTENDV…ATIMNKKDCL (188 aa)). 183–190 (AKTGTGKT) contributes to the ATP binding site. A DEAD box motif is present at residues 298-301 (DEAD). In terms of domain architecture, Helicase C-terminal spans 386-542 (SMVALIQSIE…EDYLNQDKEN (157 aa)). A disordered region spans residues 633-685 (DREFDDEDRYTSRSQNNYKSKQSSKSNRFEGRNDYSNSRRSHANQKRNFTFDD). Low complexity predominate over residues 644–658 (SRSQNNYKSKQSSKS).

Belongs to the DEAD box helicase family. DDX18/HAS1 subfamily.

Its subcellular location is the mitochondrion matrix. It carries out the reaction ATP + H2O = ADP + phosphate + H(+). Its function is as follows. ATP-dependent RNA helicase required for mitochondrial splicing of group I and II introns. Also required for efficient mitochondrial translation. In Kluyveromyces lactis (strain ATCC 8585 / CBS 2359 / DSM 70799 / NBRC 1267 / NRRL Y-1140 / WM37) (Yeast), this protein is ATP-dependent RNA helicase MSS116, mitochondrial (MSS116).